We begin with the raw amino-acid sequence, 52 residues long: Large ribosomal subunit protein eL40 (52 aa).

It belongs to the eukaryotic ribosomal protein eL40 family.

In Thermococcus onnurineus (strain NA1), this protein is Large ribosomal subunit protein eL40.